Reading from the N-terminus, the 155-residue chain is Ribonuclease H (155 aa).

The 142-residue stretch at 1–142 folds into the RNase H type-1 domain; the sequence is MLKQVEIFTD…CDELARAAAM (142 aa). Mg(2+) contacts are provided by Asp-10, Glu-48, Asp-70, and Asp-134.

It belongs to the RNase H family. As to quaternary structure, monomer. Requires Mg(2+) as cofactor.

It localises to the cytoplasm. The catalysed reaction is Endonucleolytic cleavage to 5'-phosphomonoester.. In terms of biological role, endonuclease that specifically degrades the RNA of RNA-DNA hybrids. The sequence is that of Ribonuclease H from Salmonella paratyphi C (strain RKS4594).